Here is an 84-residue protein sequence, read N- to C-terminus: Small ribosomal subunit protein bS18A (84 aa).

It belongs to the bacterial ribosomal protein bS18 family. In terms of assembly, part of the 30S ribosomal subunit. Forms a tight heterodimer with protein bS6.

Functionally, binds as a heterodimer with protein bS6 to the central domain of the 16S rRNA, where it helps stabilize the platform of the 30S subunit. This chain is Small ribosomal subunit protein bS18A, found in Mycobacterium marinum (strain ATCC BAA-535 / M).